Reading from the N-terminus, the 418-residue chain is Gamma-glutamyl phosphate reductase (418 aa).

It belongs to the gamma-glutamyl phosphate reductase family.

Its subcellular location is the cytoplasm. It carries out the reaction L-glutamate 5-semialdehyde + phosphate + NADP(+) = L-glutamyl 5-phosphate + NADPH + H(+). Its pathway is amino-acid biosynthesis; L-proline biosynthesis; L-glutamate 5-semialdehyde from L-glutamate: step 2/2. Functionally, catalyzes the NADPH-dependent reduction of L-glutamate 5-phosphate into L-glutamate 5-semialdehyde and phosphate. The product spontaneously undergoes cyclization to form 1-pyrroline-5-carboxylate. This is Gamma-glutamyl phosphate reductase from Clostridium acetobutylicum (strain ATCC 824 / DSM 792 / JCM 1419 / IAM 19013 / LMG 5710 / NBRC 13948 / NRRL B-527 / VKM B-1787 / 2291 / W).